A 419-amino-acid polypeptide reads, in one-letter code: MSIGVQSSGINISHAELSRLVDAGKSEQGDKAVRDGGRALARADAALAAVVGERVAARRDAVAGSGAQRVELARPKPDAQTRATDRRTVSGLEREHKRLAASQTPRVTGMHDALVQRHVSLDGAKAAHGEGVKRAAGDAPRAAADAPQRFAFADDKAFDAMLALGAAMQKNVQSDLAMQGKLTMLAHDAMMSAAAQDRSIGAAQMTAAIAGGALQATTSLGGAMQQMKSLSTKSMSIEKELKPQAELKQFHAEQALELRGINKPVLSNDEVSHVKIKRDTGETVRHEIDHGGERMSDEHASVLAQEAPARQHRIDMHGMRHEENLVKAGRQQMKGDLLQSGGQIGKNQIDGASAQQQGADRAEQKEDENAQQTAMAAASTRDEAAHRSREAAQKAIDAAKSQVANDNAVAAQVAGNLRT.

2 disordered regions span residues 62-94 and 338-402; these read VAGS…GLER and LQSG…AKSQ. 2 stretches are compositionally biased toward basic and acidic residues: residues 71–94 and 380–392; these read ELAR…GLER and TRDE…REAA.

This sequence belongs to the SctB/SipC family.

The protein resides in the secreted. This is Effector protein BipC (bipC) from Burkholderia pseudomallei (strain 1710b).